Here is an 88-residue protein sequence, read N- to C-terminus: DNA-directed RNA polymerase subunit omega (88 aa).

The protein belongs to the RNA polymerase subunit omega family. In terms of assembly, the RNAP catalytic core consists of 2 alpha, 1 beta, 1 beta' and 1 omega subunit. When a sigma factor is associated with the core the holoenzyme is formed, which can initiate transcription.

It catalyses the reaction RNA(n) + a ribonucleoside 5'-triphosphate = RNA(n+1) + diphosphate. Its function is as follows. Promotes RNA polymerase assembly. Latches the N- and C-terminal regions of the beta' subunit thereby facilitating its interaction with the beta and alpha subunits. This Anaeromyxobacter sp. (strain Fw109-5) protein is DNA-directed RNA polymerase subunit omega.